Reading from the N-terminus, the 906-residue chain is Catenin alpha-1 (906 aa).

Position 2 is an N-acetylthreonine (Thr2). The segment at 2–228 (TAVHAGNINF…PILYTASQAC (227 aa)) is involved in homodimerization. Residue Lys57 forms a Glycyl lysine isopeptide (Lys-Gly) (interchain with G-Cter in SUMO2) linkage. The interval 97 to 148 (VRKQGDLMKSAAGEFADDPCSSVKRGNMVRAARALLSAVTRLLILADMADVY) is interaction with JUP and CTNNB1. Residues Ser264, Ser295, and Ser297 each carry the phosphoserine modification. The segment at 325–394 (TRDDRRERIV…AVMDHVSDSF (70 aa)) is interaction with alpha-actinin. The residue at position 634 (Thr634) is a Phosphothreonine. Residue Ser641 is modified to Phosphoserine. Thr645 carries the post-translational modification Phosphothreonine. Residues Ser652 and Ser655 each carry the phosphoserine modification. Position 658 is a phosphothreonine (Thr658). Residue Lys797 forms a Glycyl lysine isopeptide (Lys-Gly) (interchain with G-Cter in SUMO2) linkage. Ser851 is modified (phosphoserine). Over residues 864–880 (PEKKPLVKREKQDETQT) the composition is skewed to basic and acidic residues. The interval 864-894 (PEKKPLVKREKQDETQTKIKRASQKKHVNPV) is disordered. The span at 881-891 (KIKRASQKKHV) shows a compositional bias: basic residues.

It belongs to the vinculin/alpha-catenin family. Monomer and homodimer; the monomer preferentially binds to CTNNB1 and the homodimer to actin. Component of an cadherin:catenin adhesion complex composed of at least of CDH26, beta-catenin/CTNNB1, alpha-catenin/CTNNA1 and p120 catenin/CTNND1. Possible component of an E-cadherin/ catenin adhesion complex together with E-cadherin/CDH1 and beta-catenin/CTNNB1 or gamma-catenin/JUP; the complex is located to adherens junctions. The stable association of CTNNA1 is controversial as CTNNA1 was shown not to bind to F-actin when assembled in the complex. Alternatively, the CTNNA1-containing complex may be linked to F-actin by other proteins such as LIMA1. Binds AFDN and F-actin. Interacts with LIMA1. Interacts with ARHGAP21. Interacts with AJUBA. Interacts with vinculin/VCL. Interacts with TJP2/ZO2 (via N-terminus). Interacts with TJP1/ZO1 (via N-terminus). In terms of processing, sumoylated. Post-translationally, phosphorylation seems to contribute to the strength of cell-cell adhesion rather than to the basic capacity for cell-cell adhesion. In terms of tissue distribution, expressed in cerebellum, heart, liver, small intestine, kidney and placenta (at protein level).

Its subcellular location is the cytoplasm. The protein resides in the cytoskeleton. It localises to the cell junction. It is found in the adherens junction. The protein localises to the cell membrane. Its subcellular location is the nucleus. Its function is as follows. Associates with the cytoplasmic domain of a variety of cadherins. The association of catenins to cadherins produces a complex which is linked to the actin filament network, and which seems to be of primary importance for cadherins cell-adhesion properties. Can associate with both E- and N-cadherins. Originally believed to be a stable component of E-cadherin/catenin adhesion complexes and to mediate the linkage of cadherins to the actin cytoskeleton at adherens junctions. In contrast, cortical actin was found to be much more dynamic than E-cadherin/catenin complexes and CTNNA1 was shown not to bind to F-actin when assembled in the complex suggesting a different linkage between actin and adherens junctions components. The homodimeric form may regulate actin filament assembly and inhibit actin branching by competing with the Arp2/3 complex for binding to actin filaments. Involved in the regulation of WWTR1/TAZ, YAP1 and TGFB1-dependent SMAD2 and SMAD3 nuclear accumulation. May play a crucial role in cell differentiation. This Mus musculus (Mouse) protein is Catenin alpha-1.